Reading from the N-terminus, the 173-residue chain is MARVEL domain-containing protein 1 (173 aa).

At M1 the chain carries N-acetylmethionine. Topologically, residues 1-29 (MLPPPPRQPPPQARAARGAVRLQRPFLRS) are cytoplasmic. The 141-residue stretch at 26–166 (FLRSPLGVLR…SALYGCGRRC (141 aa)) folds into the MARVEL domain. A helical transmembrane segment spans residues 30 to 50 (PLGVLRLLQLLAGAAFWITIA). Residues 51–59 (TSKYQGPVH) lie on the Extracellular side of the membrane. Residues 60 to 80 (FALFVSVLFWLLTLGLYFLTL) traverse the membrane as a helical segment. Topologically, residues 81-94 (LGKHELVPVLGSRW) are cytoplasmic. A helical transmembrane segment spans residues 95 to 115 (LMVNVAHDVLAAALYGAATGI). Topologically, residues 116–138 (MSDQMQRHSYCNLKDYPLPCAYH) are extracellular. Residues 139-159 (AFLAAAVCGGVCHGLYLLSAL) traverse the membrane as a helical segment. At 160-173 (YGCGRRCQGKQEVA) the chain is on the cytoplasmic side.

In terms of tissue distribution, widely expressed in normal tissues. Down-regulated in multiple primary tumors.

It localises to the cell membrane. Its subcellular location is the cytoplasm. The protein localises to the cytoskeleton. The protein resides in the nucleus. Functionally, microtubule-associated protein that exhibits cell cycle-dependent localization and can inhibit cell proliferation and migration. The chain is MARVEL domain-containing protein 1 (MARVELD1) from Homo sapiens (Human).